We begin with the raw amino-acid sequence, 210 residues long: dITP/XTP pyrophosphatase (210 aa).

Residue 13 to 18 (THNPGK) coordinates substrate. Mg(2+)-binding residues include D45 and D74. The active-site Proton acceptor is the D74. Residues S75, 160–163 (FGYD), K183, and 195–196 (HR) each bind substrate.

It belongs to the HAM1 NTPase family. Homodimer. Requires Mg(2+) as cofactor.

It carries out the reaction XTP + H2O = XMP + diphosphate + H(+). It catalyses the reaction dITP + H2O = dIMP + diphosphate + H(+). The catalysed reaction is ITP + H2O = IMP + diphosphate + H(+). Its function is as follows. Pyrophosphatase that catalyzes the hydrolysis of nucleoside triphosphates to their monophosphate derivatives, with a high preference for the non-canonical purine nucleotides XTP (xanthosine triphosphate), dITP (deoxyinosine triphosphate) and ITP. Seems to function as a house-cleaning enzyme that removes non-canonical purine nucleotides from the nucleotide pool, thus preventing their incorporation into DNA/RNA and avoiding chromosomal lesions. This chain is dITP/XTP pyrophosphatase, found in Rhodopseudomonas palustris (strain ATCC BAA-98 / CGA009).